Consider the following 405-residue polypeptide: Glucose-1-phosphate adenylyltransferase 1 (405 aa).

Alpha-D-glucose 1-phosphate is bound by residues tyrosine 96, glycine 161, 176-177 (EK), and serine 194.

It belongs to the bacterial/plant glucose-1-phosphate adenylyltransferase family. In terms of assembly, homotetramer.

It catalyses the reaction alpha-D-glucose 1-phosphate + ATP + H(+) = ADP-alpha-D-glucose + diphosphate. It participates in glycan biosynthesis; glycogen biosynthesis. Its function is as follows. Involved in the biosynthesis of ADP-glucose, a building block required for the elongation reactions to produce glycogen. Catalyzes the reaction between ATP and alpha-D-glucose 1-phosphate (G1P) to produce pyrophosphate and ADP-Glc. This is Glucose-1-phosphate adenylyltransferase 1 from Vibrio vulnificus (strain CMCP6).